The chain runs to 473 residues: Cysteine--tRNA ligase (473 aa).

C30 is a binding site for Zn(2+). Residues 32-42 (MTVYDYCHIGH) carry the 'HIGH' region motif. Zn(2+) contacts are provided by C213, H238, and E242. The 'KMSKS' region signature appears at 270-274 (KMSKS). Residue K273 coordinates ATP.

It belongs to the class-I aminoacyl-tRNA synthetase family. In terms of assembly, monomer. Requires Zn(2+) as cofactor.

Its subcellular location is the cytoplasm. The enzyme catalyses tRNA(Cys) + L-cysteine + ATP = L-cysteinyl-tRNA(Cys) + AMP + diphosphate. In Acinetobacter baumannii (strain AB307-0294), this protein is Cysteine--tRNA ligase.